We begin with the raw amino-acid sequence, 125 residues long: Acidic phospholipase A2 6 (125 aa).

S1 is a signal peptide. Residues 2–7 (NRPMPL) constitute a propeptide that is removed on maturation. 7 disulfide bridges follow: C18–C77, C33–C124, C35–C50, C49–C105, C56–C98, C66–C91, and C84–C96. Residue D30 coordinates Zn(2+). Y34 and G36 together coordinate Ca(2+). H53 is an active-site residue. D54 lines the Ca(2+) pocket. D99 is an active-site residue.

In terms of assembly, heterodimer formed between isoform 5 and isoform 6 in presence of zinc ion and monomer in absence of zinc ion. Ca(2+) serves as cofactor. Expressed by the venom gland.

Its subcellular location is the secreted. The catalysed reaction is a 1,2-diacyl-sn-glycero-3-phosphocholine + H2O = a 1-acyl-sn-glycero-3-phosphocholine + a fatty acid + H(+). In terms of biological role, PLA2 catalyzes the calcium-dependent hydrolysis of the 2-acyl groups in 3-sn-phosphoglycerides. The polypeptide is Acidic phospholipase A2 6 (Naja sagittifera (Andaman cobra)).